We begin with the raw amino-acid sequence, 179 residues long: Adenine phosphoribosyltransferase (179 aa).

It belongs to the purine/pyrimidine phosphoribosyltransferase family. As to quaternary structure, homodimer.

It is found in the cytoplasm. It catalyses the reaction AMP + diphosphate = 5-phospho-alpha-D-ribose 1-diphosphate + adenine. It participates in purine metabolism; AMP biosynthesis via salvage pathway; AMP from adenine: step 1/1. Its function is as follows. Catalyzes a salvage reaction resulting in the formation of AMP, that is energically less costly than de novo synthesis. This is Adenine phosphoribosyltransferase from Ruegeria pomeroyi (strain ATCC 700808 / DSM 15171 / DSS-3) (Silicibacter pomeroyi).